The chain runs to 103 residues: Putative membrane protein insertion efficiency factor (103 aa).

Belongs to the UPF0161 family.

It localises to the cell inner membrane. In terms of biological role, could be involved in insertion of integral membrane proteins into the membrane. The polypeptide is Putative membrane protein insertion efficiency factor (Chlamydia abortus (strain DSM 27085 / S26/3) (Chlamydophila abortus)).